The following is a 229-amino-acid chain: 2-C-methyl-D-erythritol 4-phosphate cytidylyltransferase (229 aa).

Belongs to the IspD/TarI cytidylyltransferase family. IspD subfamily.

It carries out the reaction 2-C-methyl-D-erythritol 4-phosphate + CTP + H(+) = 4-CDP-2-C-methyl-D-erythritol + diphosphate. The protein operates within isoprenoid biosynthesis; isopentenyl diphosphate biosynthesis via DXP pathway; isopentenyl diphosphate from 1-deoxy-D-xylulose 5-phosphate: step 2/6. Its function is as follows. Catalyzes the formation of 4-diphosphocytidyl-2-C-methyl-D-erythritol from CTP and 2-C-methyl-D-erythritol 4-phosphate (MEP). This chain is 2-C-methyl-D-erythritol 4-phosphate cytidylyltransferase, found in Clostridium botulinum (strain Okra / Type B1).